The sequence spans 323 residues: Ribose-phosphate pyrophosphokinase 2 (323 aa).

ATP is bound by residues 43 to 45 and 102 to 103; these read DGE and RQ. 2 residues coordinate Mg(2+): His-136 and Asp-177. Lys-200 is a catalytic residue. Residues Arg-202, Asp-226, and 230–234 each bind D-ribose 5-phosphate; that span reads DTAGT.

The protein belongs to the ribose-phosphate pyrophosphokinase family. Class I subfamily. Homohexamer. The cofactor is Mg(2+).

It is found in the cytoplasm. It catalyses the reaction D-ribose 5-phosphate + ATP = 5-phospho-alpha-D-ribose 1-diphosphate + AMP + H(+). It functions in the pathway metabolic intermediate biosynthesis; 5-phospho-alpha-D-ribose 1-diphosphate biosynthesis; 5-phospho-alpha-D-ribose 1-diphosphate from D-ribose 5-phosphate (route I): step 1/1. Its function is as follows. Involved in the biosynthesis of the central metabolite phospho-alpha-D-ribosyl-1-pyrophosphate (PRPP) via the transfer of pyrophosphoryl group from ATP to 1-hydroxyl of ribose-5-phosphate (Rib-5-P). This chain is Ribose-phosphate pyrophosphokinase 2, found in Enterococcus faecalis (strain ATCC 700802 / V583).